Reading from the N-terminus, the 839-residue chain is Transient receptor potential cation channel subfamily V member 1 (839 aa).

Residues 1–60 (MEKWASLDSDESEPPAQENSCPDPPDRDPNSKPPPAKPHIFATRSRTRLFGKGDSEEASP) form a disordered region. Residues 1-433 (MEKWASLDSD…QDKWDRFVKR (433 aa)) lie on the Cytoplasmic side of the membrane. The stretch at 111–139 (RLYDRRSIFDAVAQSNCQELESLLSFLQK) is one ANK 1 repeat. Residue Arg-116 coordinates ATP. Ser-117 is modified (phosphoserine; by PKA and PKD). Residue Thr-145 is modified to Phosphothreonine; by PKA; in vitro. The ANK 2 repeat unit spans residues 154 to 186 (TGKTCLLKAMLNLHNGQNDTIALLLDIARKTDS). ATP is bound by residues Lys-156, Lys-161, Asn-165, 200 to 203 (YKGQ), and 211 to 212 (ER). ANK repeat units follow at residues 204 to 229 (TALH…ADVQ), 250 to 277 (ELPL…QPAD), 286 to 322 (NTVL…KLHP), and 336 to 359 (TPLA…REIH). A Phosphothreonine; by PKA; in vitro modification is found at Thr-371. An ANK 7 repeat occupies 394–416 (NSVLEVIAYSSSETPNRHDMLLV). Residues 434–455 (IFYFNFFVYCLYMIIFTTAAYY) traverse the membrane as a helical segment. Over 456 to 472 (RPVEGLPPYKLNNTVGD) the chain is Extracellular. A helical transmembrane segment spans residues 473 to 497 (YFRVTGEILSVSGGVYFFFRGIQYF). At 498 to 510 (LQRRPSLKSLFVD) the chain is on the cytoplasmic side. Ser-503 is modified (phosphoserine; by PKC/PRKCE). Residues 511-532 (SYSEILFFVQSLFMLVSVVLYF) form a helical membrane-spanning segment. A resiniferatoxin-binding site is contributed by 512 to 513 (YS). The Extracellular portion of the chain corresponds to 533-535 (SHR). A helical membrane pass occupies residues 536-556 (KEYVASMVFSLAMGWTNMLYY). Thr-551 and Arg-558 together coordinate resiniferatoxin. Residues 557–559 (TRG) are Cytoplasmic-facing. Residues 560–598 (FQQMGIYAVMIEKMILRDLCRFMFVYLVFLFGFSTAVVT) form a helical membrane-spanning segment. At 599–630 (LIEDGKNNSLPVESPPHKCRGSACRPGNSYNS) the chain is on the extracellular side. Asn-605 carries N-linked (GlcNAc...) asparagine glycosylation. The pore-forming intramembrane region spans 631–652 (LYSTCLELFKFTIGMGDLEFTE). Residue Gly-644 participates in Na(+) binding. A Selectivity filter motif is present at residues 644–647 (GMGD). Residue Asp-647 coordinates Ca(2+). The Extracellular segment spans residues 653 to 656 (NYDF). Residues 657 to 683 (KAVFIILLLAYVILTYILLLNMLIALM) traverse the membrane as a helical segment. Residues 684–839 (GETVNKIAQE…FKDSMAPGEK (156 aa)) are Cytoplasmic-facing. Residues 685–713 (ETVNKIAQESKNIWKLQRAITILDTEKSF) form an AD region. A Phosphothreonine modification is found at Thr-705. Residues 768-802 (EGVKRTLSFSLRSGRVSGRNWKNFALVPLLRDAST) form an interaction with calmodulin region. Ser-775 bears the Phosphoserine mark. Positions 778 to 793 (LRSGRVSGRNWKNFAL) are required for PIP2-mediated channel inhibition. Ser-801 bears the Phosphoserine; by PKC/PRKCE and PKC/PRKCZ mark. Basic and acidic residues predominate over residues 802 to 815 (TRDRHSTQPEEVQL). Residues 802-839 (TRDRHSTQPEEVQLKHYTGSLKPEDAEVFKDSMAPGEK) form a disordered region. Position 821 is a phosphoserine (Ser-821). Over residues 823-839 (KPEDAEVFKDSMAPGEK) the composition is skewed to basic and acidic residues.

It belongs to the transient receptor (TC 1.A.4) family. TrpV subfamily. TRPV1 sub-subfamily. In terms of assembly, homotetramer. May also form a heteromeric channel with TRPV3. Interacts with CALM, PRKCM and CSK. Interacts with PRKCG and NTRK1, probably by forming a trimeric complex. Interacts with PIRT. Interacts with the Scolopendra mutilans RhTx toxin. Interacts with TMEM100. Interacts with PACS2. In terms of processing, phosphorylation by PKA reverses capsaicin-induced dephosphorylation at multiple sites probably including Ser-117 as a major phosphorylation site. Phosphorylation by CAMKII seems to regulate binding to vanilloids. Phosphorylated and modulated by PRKCE, PRKCM and probably PRKCZ. Dephosphorylation by calcineurin seems to lead to receptor desensitization and phosphorylation by CAMKII recovers activity. As to expression, detected in neurons in the root ganglia (at protein level). Detected in dorsal root ganglia.

It is found in the postsynaptic cell membrane. The protein localises to the cell projection. The protein resides in the dendritic spine membrane. Its subcellular location is the cell membrane. The catalysed reaction is Ca(2+)(in) = Ca(2+)(out). It catalyses the reaction Mg(2+)(in) = Mg(2+)(out). It carries out the reaction Na(+)(in) = Na(+)(out). The enzyme catalyses K(+)(in) = K(+)(out). Its activity is regulated as follows. The channel is sensitized by ATP binding. Repeated stimulation with capsaicin gives rise to progressively smaller responses, due to desensitization. This desensitization is triggered by the influx of calcium ions and is inhibited by elevated ATP levels. Ca(2+) and CALM displace ATP from its binding site and trigger a conformation change that leads to a closed, desensitized channel. The double-knot toxin (DkTx) from the Chinese earth tiger tarantula activates the channel and traps it in an open conformation. The Scolopendra mutilans RhTx toxin potentiates the heat activation pathway mediated by this channel by binding to the charge-rich outer pore region (in an activated state). Channel activity is activated via the interaction with PIRT and phosphatidylinositol 4,5-bisphosphate (PIP2). Both PIRT and PIP2 are required to activate channel activity. Intracellular PIP2 inhibits desensitization. Functionally, non-selective calcium permeant cation channel involved in detection of noxious chemical and thermal stimuli. Seems to mediate proton influx and may be involved in intracellular acidosis in nociceptive neurons. Involved in mediation of inflammatory pain and hyperalgesia. Sensitized by a phosphatidylinositol second messenger system activated by receptor tyrosine kinases, which involves PKC isozymes and PCL. Activation by vanilloids, like capsaicin, and temperatures higher than 42 degrees Celsius. Upon activation, exhibits a time- and Ca(2+)-dependent outward rectification, followed by a long-lasting refractory state. Mild extracellular acidic pH (6.5) potentiates channel activation by noxious heat and vanilloids, whereas acidic conditions (pH &lt;6) directly activate the channel. Can be activated by endogenous compounds, including 12-hydroperoxytetraenoic acid and bradykinin. Acts as ionotropic endocannabinoid receptor with central neuromodulatory effects. Triggers a form of long-term depression (TRPV1-LTD) mediated by the endocannabinoid anandamine in the hippocampus and nucleus accumbens by affecting AMPA receptors endocytosis. The sequence is that of Transient receptor potential cation channel subfamily V member 1 (Trpv1) from Mus musculus (Mouse).